Here is an 85-residue protein sequence, read N- to C-terminus: Protein RnfH (85 aa).

Belongs to the UPF0125 (RnfH) family.

In Cereibacter sphaeroides (strain ATCC 17023 / DSM 158 / JCM 6121 / CCUG 31486 / LMG 2827 / NBRC 12203 / NCIMB 8253 / ATH 2.4.1.) (Rhodobacter sphaeroides), this protein is Protein RnfH.